The sequence spans 356 residues: CMP-sialic acid transporter 2 (356 aa).

Basic and acidic residues predominate over residues 1–24 (MEYRRVKDQESYDVVSQKDIESPG). Residues 1–44 (MEYRRVKDQESYDVVSQKDIESPGERSLSSTSATSSLSTAGASK) form a disordered region. Topologically, residues 1-52 (MEYRRVKDQESYDVVSQKDIESPGERSLSSTSATSSLSTAGASKGKNSWKLK) are cytoplasmic. Residues 27-44 (SLSSTSATSSLSTAGASK) show a composition bias toward low complexity. Residues 53–73 (SIVTLALTLLTSSQAILIVWS) form a helical membrane-spanning segment. Over 74–82 (KRAGKYEYS) the chain is Lumenal. A helical transmembrane segment spans residues 83-103 (VTTANFSVEALKCLLSLIALY). The Cytoplasmic portion of the chain corresponds to 104–125 (RTWNSQGVTEDNRLSTSFDEVS). A helical transmembrane segment spans residues 126 to 146 (VYPIPAILYMVKNLLQYYIFA). The Lumenal portion of the chain corresponds to 147–149 (YVD). A helical transmembrane segment spans residues 150–172 (APAYQILKNLNIISTGVLYRIIL). Over 173–175 (KKK) the chain is Cytoplasmic. The chain crosses the membrane as a helical span at residues 176–196 (LSEIQWAAFILLCAGCTTAQL). Topologically, residues 197-211 (NPSSDHVLQTPIQGW) are lumenal. Residues 212–232 (VMAIVMALLSGFAGVYTEAII) form a helical membrane-spanning segment. Over 233–239 (KKRPSRN) the chain is Cytoplasmic. Residues 240-260 (INVQNFWLYIFGMLFNLVAIC) form a helical membrane-spanning segment. At 261-277 (VQDFDAVMNKGFFHGYS) the chain is on the lumenal side. The chain crosses the membrane as a helical span at residues 278-298 (FITVLMILNHALSGIAVSMVM). Residues 299–314 (KYADNIVKVYSTSVAM) lie on the Cytoplasmic side of the membrane. Residues 315–335 (LLTAVVSVFLFGFHLSLAFFL) form a helical membrane-spanning segment. Topologically, residues 336–356 (GSTVVSVSVYLHSVGKPQPQK) are lumenal.

Belongs to the nucleotide-sugar transporter family. CMP-Sialate:CMP antiporter (TC 2.A.7.12) subfamily. Expressed in roots, leaves and stalks.

It is found in the golgi apparatus membrane. In terms of biological role, sugar transporter involved in the transport of CMP-sialic acid from the cytoplasm into the Golgi. May transport important nucleotide sugars such as CMP-Kdo (2-keto-3-deoxy-D-manno-octulosonic acid) in physiological conditions. The polypeptide is CMP-sialic acid transporter 2 (Oryza sativa subsp. japonica (Rice)).